Consider the following 111-residue polypeptide: Universal stress protein B (111 aa).

Transmembrane regions (helical) follow at residues 1–21 (MINTVALFWALFIVCVVNMLR) and 90–110 (FILTSALCGLVVVALIALMLW).

It belongs to the universal stress protein B family.

Its subcellular location is the cell inner membrane. This is Universal stress protein B from Edwardsiella ictaluri (strain 93-146).